A 188-amino-acid chain; its full sequence is Elongation factor P 1 (188 aa).

This sequence belongs to the elongation factor P family.

The protein localises to the cytoplasm. The protein operates within protein biosynthesis; polypeptide chain elongation. Functionally, involved in peptide bond synthesis. Stimulates efficient translation and peptide-bond synthesis on native or reconstituted 70S ribosomes in vitro. Probably functions indirectly by altering the affinity of the ribosome for aminoacyl-tRNA, thus increasing their reactivity as acceptors for peptidyl transferase. In Mesorhizobium japonicum (strain LMG 29417 / CECT 9101 / MAFF 303099) (Mesorhizobium loti (strain MAFF 303099)), this protein is Elongation factor P 1.